The chain runs to 217 residues: Peroxiredoxin Q, chloroplastic (217 aa).

Residues 1 to 66 (MAFAASTACC…RRRAASTGIV (66 aa)) constitute a chloroplast transit peptide. The Thioredoxin domain occupies 70 to 217 (VSKGSVPPNF…GETLKIIQNL (148 aa)). Cysteine 112 (cysteine sulfenic acid (-SOH) intermediate) is an active-site residue. An intrachain disulfide couples cysteine 112 to cysteine 117.

The protein belongs to the peroxiredoxin family. BCP/PrxQ subfamily. Monomer.

It is found in the plastid. Its subcellular location is the chloroplast thylakoid lumen. The enzyme catalyses a hydroperoxide + [thioredoxin]-dithiol = an alcohol + [thioredoxin]-disulfide + H2O. Functionally, thiol-specific peroxidase that catalyzes the reduction of hydrogen peroxide and organic hydroperoxides to water and alcohols, respectively. Plays a role in cell protection against oxidative stress by detoxifying peroxides. In Triticum aestivum (Wheat), this protein is Peroxiredoxin Q, chloroplastic (PRX1).